Here is a 503-residue protein sequence, read N- to C-terminus: Arabinose import ATP-binding protein AraG 1 (503 aa).

ABC transporter domains are found at residues 5 to 240 (LRFD…MVGR) and 253 to 497 (LGDV…LPQG). 37-44 (GENGAGKS) is a binding site for ATP.

Belongs to the ABC transporter superfamily. Arabinose importer (TC 3.A.1.2.2) family. As to quaternary structure, the complex is composed of two ATP-binding proteins (AraG), two transmembrane proteins (AraH) and a solute-binding protein (AraF).

It localises to the cell inner membrane. It carries out the reaction L-arabinose(out) + ATP + H2O = L-arabinose(in) + ADP + phosphate + H(+). In terms of biological role, part of the ABC transporter complex AraFGH involved in arabinose import. Responsible for energy coupling to the transport system. The polypeptide is Arabinose import ATP-binding protein AraG 1 (Burkholderia thailandensis (strain ATCC 700388 / DSM 13276 / CCUG 48851 / CIP 106301 / E264)).